Consider the following 154-residue polypeptide: 3-dehydroquinate dehydratase 2 (154 aa).

The active-site Proton acceptor is tyrosine 23. Substrate is bound by residues asparagine 79, histidine 85, and aspartate 92. Catalysis depends on histidine 105, which acts as the Proton donor. Residues 106-107 and arginine 116 each bind substrate; that span reads IS.

Belongs to the type-II 3-dehydroquinase family. In terms of assembly, homododecamer.

The enzyme catalyses 3-dehydroquinate = 3-dehydroshikimate + H2O. It participates in metabolic intermediate biosynthesis; chorismate biosynthesis; chorismate from D-erythrose 4-phosphate and phosphoenolpyruvate: step 3/7. Its function is as follows. Catalyzes a trans-dehydration via an enolate intermediate. This chain is 3-dehydroquinate dehydratase 2 (aroQ2), found in Ralstonia nicotianae (strain ATCC BAA-1114 / GMI1000) (Ralstonia solanacearum).